We begin with the raw amino-acid sequence, 89 residues long: Long neurotoxin homolog Pa ID (89 aa).

Positions 1-21 are cleaved as a signal peptide; it reads MKTLLLTLVVVTIMCLDLGYT. Cystine bridges form between C24–C42, C35–C63, C48–C52, C67–C78, and C79–C84.

The protein belongs to the three-finger toxin family. Long-chain subfamily. Type II alpha-neurotoxin sub-subfamily. In terms of tissue distribution, expressed by the venom gland.

Its subcellular location is the secreted. Binds with high affinity to muscular (alpha-1/CHRNA1) and neuronal (alpha-7/CHRNA7) nicotinic acetylcholine receptor (nAChR) and inhibits acetylcholine from binding to the receptor, thereby impairing neuromuscular and neuronal transmission. This is Long neurotoxin homolog Pa ID from Pseudechis australis (Mulga snake).